The chain runs to 182 residues: ADP-ribosylation factor-like protein 3 (182 aa).

Glycine 2 carries N-myristoyl glycine lipidation. Position 5 is a phosphoserine (serine 5). Residues 24–31 (GLDNAGKT), threonine 48, 67–71 (DIGGQ), glycine 70, 126–129 (NKQD), and 159–161 (SAL) contribute to the GTP site. Residues threonine 31 and threonine 48 each contribute to the Mg(2+) site.

The protein belongs to the small GTPase superfamily. Arf family. In terms of assembly, found in a complex with ARL3, RP2 and UNC119 (or UNC119B); RP2 induces hydrolysis of GTP ARL3 in the complex, leading to the release of UNC119 (or UNC119B). Interacts with RP2; interaction is direct and stimulated with the activated GTP-bound form of ARL3. Interacts with SYS1. Interacts with ARL2BP; the GTP-bound form interacts with ARL2BP. Microtubule-associated protein. Does not interact with TBCC. Interacts with RP2. Interacts with PDE6D; the interaction occurs specifically with the GTP-bound form of ARL3. Interacts with GGA1; the interaction recruits PKD1:PKD2 complex to trans-Golgi network and is required for ciliary targeting of PKD1:PKD2 complex. Interacts with DNAAF9.

It is found in the golgi apparatus membrane. Its subcellular location is the cytoplasm. It localises to the cytoskeleton. The protein localises to the spindle. The protein resides in the nucleus. It is found in the microtubule organizing center. Its subcellular location is the centrosome. It localises to the cell projection. The protein localises to the cilium. Functionally, small GTP-binding protein which cycles between an inactive GDP-bound and an active GTP-bound form, and the rate of cycling is regulated by guanine nucleotide exchange factors (GEF) and GTPase-activating proteins (GAP). Required for normal cytokinesis and cilia signaling. Required for targeting proteins to the cilium, including myristoylated NPHP3 and prenylated INPP5E. Targets NPHP3 to the ciliary membrane by releasing myristoylated NPHP3 from UNC119B cargo adapter into the cilium. Requires assistance from GTPase-activating proteins (GAPs) like RP2 and PDE6D, in order to cycle between inactive GDP-bound and active GTP-bound forms. Required for PKD1:PKD2 complex targeting from the trans-Golgi network to the cilium. This Mus musculus (Mouse) protein is ADP-ribosylation factor-like protein 3.